The primary structure comprises 197 residues: Chaperone protein dnaJ 20, chloroplastic (197 aa).

The N-terminal 60 residues, 1-60 (MKCYKSSSILSTNHHPFFYKQQPISSLQPTSIPTTISYPTRTRFSSTRIQSRLTHDDPVK), are a transit peptide targeting the chloroplast. The J domain occupies 66 to 133 (SFYDLLGVTE…RRRVLYDRDL (68 aa)). A disordered region spans residues 169 to 197 (SGLRRRSNQKDNNTMSWAARMRRQQQESS).

Belongs to the DnaJ family. C/III subfamily. In terms of tissue distribution, light-grown seedlings.

The protein localises to the plastid. It is found in the chloroplast. Functionally, plays a continuous role in plant development probably in the structural organization of compartments. In Arabidopsis thaliana (Mouse-ear cress), this protein is Chaperone protein dnaJ 20, chloroplastic (ATJ20).